The following is a 532-amino-acid chain: Eukaryotic translation initiation factor 4B1 (532 aa).

3 disordered regions span residues 16–365 (EAER…LEEQ), 401–434 (KKLE…IIRG), and 451–532 (RFRQ…REGW). Low complexity predominate over residues 26-35 (AEATAATADT). 2 stretches are compositionally biased toward gly residues: residues 105–120 (RLGG…SGGR) and 132–147 (WSGG…YGGG). Over residues 167–180 (RADEVDDWGKEKKP) the composition is skewed to basic and acidic residues. Positions 177-184 (EKKPLPSF) match the Nuclear localization signal 1 motif. A compositionally biased stretch (gly residues) spans 193–217 (SGDGGGFGGGGSGFGGGGGGGGGGL). Residues 237-244 (SSTFGSSF) carry the Nuclear localization signal 2 motif. The segment covering 237-247 (SSTFGSSFGDS) has biased composition (low complexity). 2 stretches are compositionally biased toward basic and acidic residues: residues 249–263 (QEER…RKVE) and 286–310 (RPRE…EAKK). Positions 315–337 (TSRPTSAHSSRPSSAQSNRSESS) are enriched in low complexity. 4 stretches are compositionally biased toward basic and acidic residues: residues 355 to 365 (AKPREVLLEEQ), 401 to 416 (KKLE…KESD), 472 to 494 (ERTH…ERPR), and 507 to 520 (NEQR…KERG).

It belongs to the eIF-4 subunit B family. In terms of assembly, homodimer. Nonspherical monomer. mRNA-discriminating component of initiation complexes. Phosphorylated.

Its subcellular location is the nucleus. Functionally, promotes the eIF4F and eIF4A RNA-dependent ATP-hydrolysis activity with different efficiency depending on mRNAs, thus providing mRNA discrimination during initiation of translation. The chain is Eukaryotic translation initiation factor 4B1 from Arabidopsis thaliana (Mouse-ear cress).